Reading from the N-terminus, the 427-residue chain is Glutamate-1-semialdehyde 2,1-aminomutase (427 aa).

Lys265 is subject to N6-(pyridoxal phosphate)lysine.

It belongs to the class-III pyridoxal-phosphate-dependent aminotransferase family. HemL subfamily. In terms of assembly, homodimer. Pyridoxal 5'-phosphate serves as cofactor.

It localises to the cytoplasm. It catalyses the reaction (S)-4-amino-5-oxopentanoate = 5-aminolevulinate. Its pathway is porphyrin-containing compound metabolism; protoporphyrin-IX biosynthesis; 5-aminolevulinate from L-glutamyl-tRNA(Glu): step 2/2. The chain is Glutamate-1-semialdehyde 2,1-aminomutase from Nitratiruptor sp. (strain SB155-2).